A 212-amino-acid polypeptide reads, in one-letter code: Adenylate kinase (212 aa).

ATP is bound at residue 10 to 15 (GAGKGT). An NMP region spans residues 30-59 (AIGDIFRAIIKTSSKDAEVINSYVEQGKLI). Residues Arg36, 57–59 (KLI), 85–88 (GYPR), and Gln92 each bind AMP. Residues 122–160 (GRYSCKSCGKIYNDYFLKPRIDKICDVCKSSVFEYRKDD) are LID. ATP is bound at residue Arg123. Zn(2+) is bound by residues Cys126 and Cys129. 132–133 (IY) contacts ATP. Residues Cys146 and Cys149 each contribute to the Zn(2+) site. Residues Arg157 and Arg168 each coordinate AMP. Lys196 contacts ATP.

Belongs to the adenylate kinase family. In terms of assembly, monomer.

It localises to the cytoplasm. It catalyses the reaction AMP + ATP = 2 ADP. It participates in purine metabolism; AMP biosynthesis via salvage pathway; AMP from ADP: step 1/1. Catalyzes the reversible transfer of the terminal phosphate group between ATP and AMP. Plays an important role in cellular energy homeostasis and in adenine nucleotide metabolism. The chain is Adenylate kinase from Rickettsia bellii (strain RML369-C).